The primary structure comprises 193 residues: Signal peptidase I (193 aa).

The Cytoplasmic segment spans residues 1–25 (MTEEQKPTSEKSVKRKSNTYWEWGK). The chain crosses the membrane as a helical span at residues 26–42 (AIIIAVALALLIRHFLF). The Extracellular portion of the chain corresponds to 43 to 193 (EPYLVEGSSM…FPFHDMRQTK (151 aa)). Residues serine 51 and lysine 93 contribute to the active site.

The protein belongs to the peptidase S26 family.

It localises to the cell membrane. It catalyses the reaction Cleavage of hydrophobic, N-terminal signal or leader sequences from secreted and periplasmic proteins.. The sequence is that of Signal peptidase I (sipS2) from Bacillus amyloliquefaciens (Bacillus velezensis).